Here is a 227-residue protein sequence, read N- to C-terminus: ATP synthase F(0) complex subunit a (227 aa).

A run of 6 helical transmembrane segments spans residues 14 to 34 (LFGIPLIALALLLPWTLFPAP), 69 to 89 (WGPYILLVMVFLISINMLGLL), 98 to 118 (QLSVNMALAVPVWLMTVIIGL), 132 to 152 (EGTPVPLIPALILIETISLFI), 180 to 200 (FVLLPLMPTVAILTTILLFLL), and 202 to 222 (LLEVAVAMIQAYVFVLLLSLY).

Belongs to the ATPase A chain family. In terms of assembly, component of the ATP synthase complex composed at least of ATP5F1A/subunit alpha, ATP5F1B/subunit beta, ATP5MC1/subunit c (homooctomer), MT-ATP6/subunit a, MT-ATP8/subunit 8, ATP5ME/subunit e, ATP5MF/subunit f, ATP5MG/subunit g, ATP5MK/subunit k, ATP5MJ/subunit j, ATP5F1C/subunit gamma, ATP5F1D/subunit delta, ATP5F1E/subunit epsilon, ATP5PF/subunit F6, ATP5PB/subunit b, ATP5PD/subunit d, ATP5PO/subunit OSCP. ATP synthase complex consists of a soluble F(1) head domain (subunits alpha(3) and beta(3)) - the catalytic core - and a membrane F(0) domain - the membrane proton channel (subunits c, a, 8, e, f, g, k and j). These two domains are linked by a central stalk (subunits gamma, delta, and epsilon) rotating inside the F1 region and a stationary peripheral stalk (subunits F6, b, d, and OSCP). Interacts with DNAJC30; interaction is direct.

It is found in the mitochondrion inner membrane. The enzyme catalyses H(+)(in) = H(+)(out). In terms of biological role, subunit a, of the mitochondrial membrane ATP synthase complex (F(1)F(0) ATP synthase or Complex V) that produces ATP from ADP in the presence of a proton gradient across the membrane which is generated by electron transport complexes of the respiratory chain. ATP synthase complex consist of a soluble F(1) head domain - the catalytic core - and a membrane F(1) domain - the membrane proton channel. These two domains are linked by a central stalk rotating inside the F(1) region and a stationary peripheral stalk. During catalysis, ATP synthesis in the catalytic domain of F(1) is coupled via a rotary mechanism of the central stalk subunits to proton translocation. With the subunit c (ATP5MC1), forms the proton-conducting channel in the F(0) domain, that contains two crucial half-channels (inlet and outlet) that facilitate proton movement from the mitochondrial intermembrane space (IMS) into the matrix. Protons are taken up via the inlet half-channel and released through the outlet half-channel, following a Grotthuss mechanism. This is ATP synthase F(0) complex subunit a from Tetraodon nigroviridis (Spotted green pufferfish).